The primary structure comprises 532 residues: Probable cytochrome c oxidase subunit 1 (532 aa).

8 consecutive transmembrane segments (helical) span residues 33 to 53 (IMYI…SLLF), 74 to 94 (VLIT…ALFG), 95 to 115 (GFGN…FPRL), 118 to 138 (ISFW…FVDG), 163 to 183 (MAIF…INLI), 200 to 220 (PLFV…MPVL), 252 to 272 (LFWF…FGIV), and 284 to 304 (IFGY…GFIV). H79 lines the Fe(II)-heme a pocket. 2 residues coordinate Cu cation: H258 and Y262. Residues H307 and H308 each contribute to the Cu cation site. 2 consecutive transmembrane segments (helical) span residues 318-338 (ALIY…IKIF) and 355-375 (MLFS…GIIL). H393 is a heme a3 binding site. Transmembrane regions (helical) follow at residues 394-414 (FHYT…YYWF), 431-451 (FWIT…LGLA), and 473-493 (IGAG…FYTL). H395 is a binding site for Fe(II)-heme a.

It belongs to the heme-copper respiratory oxidase family.

The protein resides in the cell membrane. The catalysed reaction is 4 Fe(II)-[cytochrome c] + O2 + 8 H(+)(in) = 4 Fe(III)-[cytochrome c] + 2 H2O + 4 H(+)(out). The protein operates within energy metabolism; oxidative phosphorylation. Functionally, cytochrome c oxidase is the component of the respiratory chain that catalyzes the reduction of oxygen to water. Subunits 1-3 form the functional core of the enzyme complex. CO I is the catalytic subunit of the enzyme. Electrons originating in cytochrome c are transferred via the copper A center of subunit 2 and heme A of subunit 1 to the bimetallic center formed by heme A3 and copper B. This chain is Probable cytochrome c oxidase subunit 1 (ctaD), found in Rickettsia bellii (strain RML369-C).